A 302-amino-acid polypeptide reads, in one-letter code: Glycine--tRNA ligase alpha subunit (302 aa).

It belongs to the class-II aminoacyl-tRNA synthetase family. As to quaternary structure, tetramer of two alpha and two beta subunits.

It is found in the cytoplasm. The catalysed reaction is tRNA(Gly) + glycine + ATP = glycyl-tRNA(Gly) + AMP + diphosphate. The polypeptide is Glycine--tRNA ligase alpha subunit (Wigglesworthia glossinidia brevipalpis).